The following is a 63-amino-acid chain: Cecropin-A1 (63 aa).

The first 23 residues, 1-23 (MKFYNIFVFVALILAITIGQSEA), serve as a signal peptide directing secretion. R62 carries the arginine amide modification.

The protein belongs to the cecropin family.

Its subcellular location is the secreted. Its function is as follows. Cecropins have lytic and antibacterial activity against several Gram-positive and Gram-negative bacteria. In Drosophila mauritiana (Fruit fly), this protein is Cecropin-A1 (CecA1).